Here is a 239-residue protein sequence, read N- to C-terminus: Sugar fermentation stimulation protein homolog (239 aa).

It belongs to the SfsA family.

The chain is Sugar fermentation stimulation protein homolog from Methanobrevibacter smithii (strain ATCC 35061 / DSM 861 / OCM 144 / PS).